We begin with the raw amino-acid sequence, 436 residues long: Trigger factor (436 aa).

The PPIase FKBP-type domain maps to 163–248; the sequence is DDRIVLDFAG…VKEVAEAVLP (86 aa).

It belongs to the FKBP-type PPIase family. Tig subfamily.

Its subcellular location is the cytoplasm. The catalysed reaction is [protein]-peptidylproline (omega=180) = [protein]-peptidylproline (omega=0). Involved in protein export. Acts as a chaperone by maintaining the newly synthesized protein in an open conformation. Functions as a peptidyl-prolyl cis-trans isomerase. In Bordetella avium (strain 197N), this protein is Trigger factor.